The primary structure comprises 405 residues: Eukaryotic initiation factor 4A (405 aa).

The short motif at proline 32–glutamine 60 is the Q motif element. In terms of domain architecture, Helicase ATP-binding spans isoleucine 63 to isoleucine 233. An ATP-binding site is contributed by alanine 76–threonine 83. A DEAD box motif is present at residues aspartate 181 to aspartate 184. The Helicase C-terminal domain occupies glycine 244 to isoleucine 405.

The protein belongs to the DEAD box helicase family. eIF4A subfamily.

Its subcellular location is the cytoplasm. The enzyme catalyses ATP + H2O = ADP + phosphate + H(+). Its function is as follows. ATP-dependent RNA helicase which is a subunit of the eIF4F complex involved in cap recognition and is required for mRNA binding to ribosome. In the current model of translation initiation, eIF4A unwinds RNA secondary structures in the 5'-UTR of mRNAs which is necessary to allow efficient binding of the small ribosomal subunit, and subsequent scanning for the initiator codon. This chain is Eukaryotic initiation factor 4A (tifA), found in Dictyostelium discoideum (Social amoeba).